We begin with the raw amino-acid sequence, 471 residues long: Kynurenine 3-monooxygenase (471 aa).

FAD is bound by residues V19, 37-40, and A57; that span reads YESR. 2 residues coordinate L-kynurenine: R85 and Y99. FAD contacts are provided by residues R111, L136, T172, D304, and 317–318; that span reads MN. 2 residues coordinate L-kynurenine: N363 and Y398. Transmembrane regions (helical) follow at residues 385-404 and 425-445; these read CLHT…VTFS and ALFF…TGPT.

Belongs to the aromatic-ring hydroxylase family. KMO subfamily. FAD is required as a cofactor.

The protein localises to the mitochondrion outer membrane. It catalyses the reaction L-kynurenine + NADPH + O2 + H(+) = 3-hydroxy-L-kynurenine + NADP(+) + H2O. It participates in cofactor biosynthesis; NAD(+) biosynthesis; quinolinate from L-kynurenine: step 1/3. Its function is as follows. Catalyzes the hydroxylation of L-kynurenine (L-Kyn) to form 3-hydroxy-L-kynurenine (L-3OHKyn). Required for synthesis of quinolinic acid, a neurotoxic NMDA receptor antagonist and potential endogenous inhibitor of NMDA receptor signaling in axonal targeting, synaptogenesis and apoptosis during brain development. Quinolinic acid may also affect NMDA receptor signaling in pancreatic beta cells, osteoblasts, myocardial cells, and the gastrointestinal tract. The protein is Kynurenine 3-monooxygenase of Sus scrofa (Pig).